The sequence spans 636 residues: Sodium-dependent proline transporter (636 aa).

The Cytoplasmic portion of the chain corresponds to 1–45 (MKKLQGAHLRKPVTPDLLMTPSDQGDVDLDVDFAAHRGNWTGKLD). At threonine 20 the chain carries Phosphothreonine. Residue serine 22 is modified to Phosphoserine. Transmembrane regions (helical) follow at residues 46–66 (FLLS…FPYR), 74–93 (AFLV…LFFL), and 117–137 (GAGA…NMII). At 138-214 (AYVLFYLFAS…QGIGSPGEIR (77 aa)) the chain is on the extracellular side. A glycan (N-linked (GlcNAc...) asparagine) is linked at asparagine 182. The next 9 helical transmembrane spans lie at 215-233 (WNLC…LCIL), 242-259 (VVYF…MLLV), 295-312 (IFYS…FASY), 324-345 (FIVT…FSVL), 378-397 (LPLS…TLGL), 425-443 (VFSG…ILTT), 459-479 (SFGL…VYGI), 500-519 (ACWL…YSIV), and 538-556 (LGIL…GMLV). Over 557–636 (AVLREEGSLW…EIAEEEESMM (80 aa)) the chain is Cytoplasmic. Residues serine 573 and serine 582 each carry the phosphoserine modification. Position 588 is a phosphothreonine (threonine 588). Residue tyrosine 591 is modified to Phosphotyrosine. Phosphoserine occurs at positions 598 and 600.

This sequence belongs to the sodium:neurotransmitter symporter (SNF) (TC 2.A.22) family. SLC6A7 subfamily. Brain specific (at protein level). Highly expressed in hippocampus, corpus striatum and temporal cortex. Also expressed in frontal cortex, occipital cortex and, at lower levels, in cerebellum and parietal cortex (at protein level).

It is found in the synaptic cell membrane. It catalyses the reaction L-proline(out) + chloride(out) + 2 Na(+)(out) = L-proline(in) + chloride(in) + 2 Na(+)(in). It carries out the reaction L-pipecolate(out) + chloride(out) + 2 Na(+)(out) = L-pipecolate(in) + chloride(in) + 2 Na(+)(in). In terms of biological role, brain specific sodium (and chloride)-dependent proline transporter. Terminates the action of proline by its high affinity sodium-dependent reuptake into presynaptic terminals. This chain is Sodium-dependent proline transporter, found in Homo sapiens (Human).